We begin with the raw amino-acid sequence, 301 residues long: GLABROUS1 enhancer-binding protein-like 2 (301 aa).

The segment at 1-62 (MATPTELGFS…NTKMASPPSN (62 aa)) is disordered. The segment covering 44-54 (KKKKKKTKHNT) has biased composition (basic residues). Residues 268–289 (LSNEWKALCVEELKLNINKLRF) form a non-canonical leucine-zipper region.

Belongs to the GeBP family. As to quaternary structure, homo- and heterodimers. Interacts with GEBP, GPL1 and GPL3. Expressed in the apical meristem and young leaf primordia. Detected in the vascular tissues of cotyledons and leaves, in hydathodes and in the septun of siliques, but not in roots.

The protein resides in the nucleus. Probable transcription factor. May play redundant roles with GEBP and GPL1 in cytokinin responses by regulating the transcript levels of type-A ARR response genes. Involved in stress responses. Plays a repressive role in cell expansion by counteracting the positive role of CPR5 in this process, but does not regulate cell proliferation or endoreduplication. In Arabidopsis thaliana (Mouse-ear cress), this protein is GLABROUS1 enhancer-binding protein-like 2.